The sequence spans 200 residues: Mpv17-like protein 2 (200 aa).

3 helical membrane passes run 24–40, 63–83, and 102–122; these read ALLL…MAAG, ASMF…YLWL, and VLVD…LGLG.

The protein belongs to the peroxisomal membrane protein PXMP2/4 family. As to quaternary structure, interacts with the large mitochondrial ribosomal subunit.

Its subcellular location is the membrane. It localises to the mitochondrion inner membrane. In terms of biological role, required for the assembly and stability of the mitochondrial ribosome. Is a positive regulator of mitochondrial protein synthesis. This Mus musculus (Mouse) protein is Mpv17-like protein 2 (Mpv17l2).